The sequence spans 979 residues: Translation initiation factor IF-2 (979 aa).

Residues 50-77 (LKRSHGQSDDSARKKITLTKRETSEIRQ) are compositionally biased toward basic and acidic residues. Residues 50–385 (LKRSHGQSDD…GKHNADDARS (336 aa)) are disordered. Positions 78–87 (SDSTGKTRTV) are enriched in polar residues. Composition is skewed to basic and acidic residues over residues 98 to 109 (IKRDDVESHGDG), 121 to 142 (EEVR…RQEA), and 149 to 173 (EAAE…RRQA). Low complexity predominate over residues 174–192 (ELLAQKAAEEAAAAQAAAD). 3 stretches are compositionally biased toward basic and acidic residues: residues 196–211 (ETAR…RLAT), 219–263 (NADD…EAEA), and 280–291 (PSERKAEEKKAE). The segment covering 317–327 (APAATTTTAAA) has biased composition (low complexity). Residues 351–368 (GGGLKTRGDSSGGVGGWR) are compositionally biased toward gly residues. A tr-type G domain is found at 479–646 (PRPPVVTVMG…NVLLQAEVLE (168 aa)). A G1 region spans residues 488 to 495 (GHVDHGKT). A GTP-binding site is contributed by 488-495 (GHVDHGKT). The segment at 513 to 517 (GITQH) is G2. The segment at 534–537 (DTPG) is G3. Residues 534 to 538 (DTPGH) and 588 to 591 (TKVD) contribute to the GTP site. The segment at 588–591 (TKVD) is G4. A G5 region spans residues 624-626 (SAK).

Belongs to the TRAFAC class translation factor GTPase superfamily. Classic translation factor GTPase family. IF-2 subfamily.

It is found in the cytoplasm. In terms of biological role, one of the essential components for the initiation of protein synthesis. Protects formylmethionyl-tRNA from spontaneous hydrolysis and promotes its binding to the 30S ribosomal subunits. Also involved in the hydrolysis of GTP during the formation of the 70S ribosomal complex. The protein is Translation initiation factor IF-2 of Cupriavidus metallidurans (strain ATCC 43123 / DSM 2839 / NBRC 102507 / CH34) (Ralstonia metallidurans).